A 205-amino-acid chain; its full sequence is N-(5'-phosphoribosyl)anthranilate isomerase (205 aa).

The protein belongs to the TrpF family.

It catalyses the reaction N-(5-phospho-beta-D-ribosyl)anthranilate = 1-(2-carboxyphenylamino)-1-deoxy-D-ribulose 5-phosphate. It functions in the pathway amino-acid biosynthesis; L-tryptophan biosynthesis; L-tryptophan from chorismate: step 3/5. This Maridesulfovibrio salexigens (strain ATCC 14822 / DSM 2638 / NCIMB 8403 / VKM B-1763) (Desulfovibrio salexigens) protein is N-(5'-phosphoribosyl)anthranilate isomerase.